A 133-amino-acid chain; its full sequence is Small ribosomal subunit protein uS8 (133 aa).

This sequence belongs to the universal ribosomal protein uS8 family. Part of the 30S ribosomal subunit.

Its function is as follows. One of the primary rRNA binding proteins, it binds directly to 16S rRNA central domain where it helps coordinate assembly of the platform of the 30S subunit. The sequence is that of Small ribosomal subunit protein uS8 from Desulfurococcus amylolyticus (strain DSM 18924 / JCM 16383 / VKM B-2413 / 1221n) (Desulfurococcus kamchatkensis).